The sequence spans 139 residues: GSK3B-interacting protein (139 aa).

Residues 1-22 (METDCNPMELSSMSGFEEGSEL) form a disordered region. The interval 41-45 (VNDVL) is required for PRKAR2A interaction; contributes to a protective effect against H(2)O(2)-induced apoptosis. Residues 115–139 (SPAYREAFGNALLQRLEALKRDGQS) are interaction with GSK3B and acts as a GSK3B inhibitor.

Belongs to the GSKIP family. As to quaternary structure, forms a complex composed of PRKAR2A or PRKAR2B, GSK3B and GSKIP through GSKIP interaction; facilitates PKA-induced phosphorylation of GSK3B leading to GSK3B inactivation; recruits DNM1L through GSK3B for PKA-mediated phosphorylation of DNM1L; promotes beta-catenin degradation through GSK3B-induced phosphorylation of beta-catenin; stabilizes beta-catenin and enhances Wnt-induced signaling through PKA-induced phosphorylation of beta-catenin. Interacts with GSK3B; induces GSK3B-mediated phosphorylation of GSKIP and inhibits GSK3B kinase activity. Phosphorylated by GSK3B. In terms of tissue distribution, detected in heart, brain, placenta, liver, skeletal muscle, kidney, testis, lung and pancreas.

The protein localises to the cytoplasm. It localises to the nucleus. Functionally, A-kinase anchoring protein for GSK3B and PKA that regulates or facilitates their kinase activity towards their targets. The ternary complex enhances Wnt-induced signaling by facilitating the GSK3B- and PKA-induced phosphorylation of beta-catenin leading to beta-catenin degradation and stabilization respectively. Upon cAMP activation, the ternary complex contributes to neuroprotection against oxidative stress-induced apoptosis by facilitating the PKA-induced phosphorylation of DML1 and PKA-induced inactivation of GSK3B. During neurite outgrowth promotes neuron proliferation; while increases beta-catenin-induced transcriptional activity through GSK3B kinase activity inhibition, reduces N-cadherin level to promote cell cycle progression. In Homo sapiens (Human), this protein is GSK3B-interacting protein.